The sequence spans 557 residues: Potassium-transporting ATPase potassium-binding subunit (557 aa).

Transmembrane regions (helical) follow at residues glycine 5–serine 25, leucine 63–glycine 83, glycine 132–isoleucine 152, leucine 170–isoleucine 190, phenylalanine 253–valine 273, leucine 283–valine 303, valine 329–alanine 349, alanine 356–valine 376, glycine 379–glycine 399, leucine 416–methionine 436, leucine 484–alanine 504, and leucine 526–alanine 546.

Belongs to the KdpA family. The system is composed of three essential subunits: KdpA, KdpB and KdpC.

Its subcellular location is the cell inner membrane. In terms of biological role, part of the high-affinity ATP-driven potassium transport (or Kdp) system, which catalyzes the hydrolysis of ATP coupled with the electrogenic transport of potassium into the cytoplasm. This subunit binds the periplasmic potassium ions and delivers the ions to the membrane domain of KdpB through an intramembrane tunnel. In Escherichia coli O157:H7, this protein is Potassium-transporting ATPase potassium-binding subunit.